Here is a 551-residue protein sequence, read N- to C-terminus: METEADTAKTFWSEVDVDGVFDELMEVLRRLRHTLRHNTATDREYVQAMRIVQESKLIRTETEDVLLDEDILTVTVSEPQCSPESLQNGIEPEDPQHSTARLYSDVGVVCSHMSSSRPDPAAPLVFQPHVCSSACVPHLPAHTHHLLGHNPLRAPLLCHFQRVCDDAGVVYKAPCGRSLSCMQEVLHFLLQTQSVCVLQTDRFSFSTQVCVERQVCAAPLLERDLSRGLEPVPVALVNTVDGARPREFRYRRERWPHGCFLSAEPLYSVCCDCTDGCTDAHSCACVRRTAGAAYTHQRLTHTLRTGLFECGPWCGCERSRCENRVVQKGLRVRLQVFRTPEHMWAVRCRDDLDAGTFICIYAGVVLRLQQSSECPAERSGEPAVSDDEVQLVEEWRIPEETHTHTHTLDSSPPLHVPVIQRPAEHSLAQRRDQQQFSISSETEDNRCEQALRKKPRLMESNGLQDSRTHTLTHTHDGVYYLDASREGNVARFFTHSDDPNLFIQNVFTDTHDPQFPLIAFFTCRPVKAGTELTWSCTNTEQQKTEEKHCSV.

The MBD domain maps to L146–C210. The Pre-SET domain maps to V269 to G329. 9 residues coordinate Zn(2+): C271, C273, C277, C283, C285, C310, C314, C316, and C321. Residues V332–T537 enclose the SET domain. H342–W344 provides a ligand contact to S-adenosyl-L-methionine. Residues S426–C447 form a disordered region. S-adenosyl-L-methionine-binding positions include R491 and T494–H495.

It belongs to the class V-like SAM-binding methyltransferase superfamily.

Its subcellular location is the nucleus. The protein resides in the chromosome. It carries out the reaction N(6),N(6)-dimethyl-L-lysyl(9)-[histone H3] + S-adenosyl-L-methionine = N(6),N(6),N(6)-trimethyl-L-lysyl(9)-[histone H3] + S-adenosyl-L-homocysteine + H(+). Its function is as follows. Histone methyltransferase involved in left-right axis specification in early development and mitosis. Specifically trimethylates 'Lys-9' of histone H3 (H3K9me3). H3K9me3 represents a specific tag for epigenetic transcriptional repression by recruiting HP1 (CBX1, CBX3 and/or CBX5) proteins to methylated histones. Contributes to H3K9me3 in both the interspersed repetitive elements and centromere-associated repeats. Plays a role in chromosome condensation and segregation during mitosis. During early development, required to specify the left-right axis by repressing expression of FGF8, leading to negatively regulate the dorsal organizer formation. The sequence is that of Histone-lysine N-methyltransferase SETDB2 (setdb2) from Danio rerio (Zebrafish).